Consider the following 105-residue polypeptide: Large ribosomal subunit protein uL24 (105 aa).

Belongs to the universal ribosomal protein uL24 family. As to quaternary structure, part of the 50S ribosomal subunit.

Functionally, one of two assembly initiator proteins, it binds directly to the 5'-end of the 23S rRNA, where it nucleates assembly of the 50S subunit. One of the proteins that surrounds the polypeptide exit tunnel on the outside of the subunit. The chain is Large ribosomal subunit protein uL24 from Thermotoga petrophila (strain ATCC BAA-488 / DSM 13995 / JCM 10881 / RKU-1).